The following is a 1445-amino-acid chain: Tensin-3 (1445 aa).

One can recognise a Phosphatase tensin-type domain in the interval 1–170 (MEEGHGLDLT…QFLSGLLSGS (170 aa)). Positions 175–301 (ASPLFLHFVI…GKVELVFSAT (127 aa)) constitute a C2 tensin-type domain. Threonine 323 is modified (phosphothreonine). Phosphoserine is present on residues serine 332 and serine 361. The tract at residues 358-421 (RKKSSSDPGI…GTRRGLSAQE (64 aa)) is disordered. Residues 386 to 400 (TLSVSSDSGHSTASA) are compositionally biased toward polar residues. A phosphoserine mark is found at serine 440 and serine 516. Positions 538-568 (VPDLGLGMDGPYERERTFGSREPKQPQPLLR) are disordered. A compositionally biased stretch (basic and acidic residues) spans 548-561 (PYERERTFGSREPK). Serine 571 bears the Phosphoserine mark. Disordered stretches follow at residues 618–695 (DNPG…TLDI) and 717–769 (PTHM…QPLG). Threonine 632 bears the Phosphothreonine mark. A phosphoserine mark is found at serine 649, serine 660, serine 687, and serine 690. A compositionally biased stretch (polar residues) spans 723–733 (LGSQANGSVSP). A phosphoserine mark is found at serine 735 and serine 776. A Phosphotyrosine modification is found at tyrosine 780. 3 positions are modified to phosphoserine: serine 811, serine 866, and serine 901. Disordered regions lie at residues 859 to 981 (ALRH…TRKD) and 1076 to 1127 (GHSS…PHSG). Over residues 864–873 (PFSPPEPPLS) the composition is skewed to pro residues. A compositionally biased stretch (polar residues) spans 914–935 (ASSTPSFQQAFASSCTISSNGP). The span at 1099–1109 (PEKKRASEGDR) shows a compositional bias: basic and acidic residues. Residues 1110 to 1127 (SLGSVSPSSSGFSSPHSG) are compositionally biased toward low complexity. A phosphoserine mark is found at serine 1149 and serine 1154. Residues 1172–1282 (WYKADISREQ…ALPCKLLIPE (111 aa)) enclose the SH2 domain. Phosphoserine is present on residues serine 1293 and serine 1441. Positions 1310 to 1444 (ACNVWYLNSV…SKVMIGSPKK (135 aa)) constitute a PTB domain.

Belongs to the PTEN phosphatase protein family. As to quaternary structure, interacts with EGFR; EGF promotes the interaction with EGFR. Interacts with PTK2/FAK1 and BCAR1. Tyrosine phosphorylation is critical for these interactions. Interacts with Rho GTPase-activating protein DLC1 and with the regulatory p85 subunit of the PI3K kinase complex; in resting cells, interacts (via C2 tensin-type domain) with DLC1 but, following growth factor stimulation, TNS3 is phosphorylated which leads to weakened interaction with DLC1 and enhanced interaction (via C2 tensin-type domain) with p85 while DLC1 interaction with PTEN increases. Interacts (when phosphorylated on the SH2 domain) with integrins ITGB1, ITGB3 and ITGB5 and with scaffolding protein PEAK1 (phosphorylated on 'Tyr-635'); mediates the association of PEAK1 with ITGB1, ITGB3 and ITGB5. Interacts (via N-terminus) with DOCK5 (via N-terminus); the interaction increases DOCK5 guanine nucleotide exchange activity towards Rac. Interacts with receptor tyrosine kinase MET. Post-translationally, phosphorylated on Ser/Thr and Tyr residues. Phosphorylated on Thr-323 in the C2-type tensin domain following EGF stimulation which changes its binding preference from DLC1 to the p85 regulatory subunit of the PI3K kinase complex. EGF induces tyrosine phosphorylation in a time- and dose-dependent manner. Phosphorylation of the SH2 domain enhances interaction with PEAK1. In terms of tissue distribution, expressed in umbilical vein endothelial cells, epithelial cells, and fibroblasts cells (at protein level). Highly expressed in thyroid, kidney and placenta. Low expression in heart, skeletal muscle, spleen, liver, and lung. Expressed at higher levels in tonsil-derived mesenchymal stem cells (MSCs) than in adipose tissue-derived MSCs or bone marrow-derived MSCs. Expressed in tumor endothelial cells. Expression seems to be down-regulated in thyroid tumor tissues and in anaplastic carcinomas.

It is found in the cell junction. The protein resides in the focal adhesion. It localises to the cell projection. Its subcellular location is the podosome. Functionally, may act as a protein phosphatase and/or a lipid phosphatase. Involved in the dissociation of the integrin-tensin-actin complex. EGF activates TNS4 and down-regulates TNS3 which results in capping the tail of ITGB1. Increases DOCK5 guanine nucleotide exchange activity towards Rac and plays a role in osteoclast podosome organization. Enhances RHOA activation in the presence of DLC1. Required for growth factor-induced epithelial cell migration; growth factor stimulation induces TNS3 phosphorylation which changes its binding preference from DLC1 to the p85 regulatory subunit of the PI3K kinase complex, displacing PI3K inhibitor PTEN and resulting in translocation of the TNS3-p85 complex to the leading edge of migrating cells to promote RAC1 activation. Meanwhile, PTEN switches binding preference from p85 to DLC1 and the PTEN-DLC1 complex translocates to the posterior of migrating cells to activate RHOA. Acts as an adapter protein by bridging the association of scaffolding protein PEAK1 with integrins ITGB1, ITGB3 and ITGB5 which contributes to the promotion of cell migration. Controls tonsil-derived mesenchymal stem cell proliferation and differentiation by regulating the activity of integrin ITGB1. The chain is Tensin-3 (TNS3) from Homo sapiens (Human).